The following is a 299-amino-acid chain: Arginase (299 aa).

Positions 99, 122, 124, and 126 each coordinate Mn(2+). Substrate contacts are provided by residues 124-128 (HGDVN), 135-137 (SGN), and Asp-178. Mn(2+) is bound by residues Asp-226 and Asp-228. Substrate contacts are provided by Thr-240 and Glu-271.

The protein belongs to the arginase family. Homohexamer. The cofactor is Mn(2+).

The catalysed reaction is L-arginine + H2O = urea + L-ornithine. It functions in the pathway nitrogen metabolism; urea cycle; L-ornithine and urea from L-arginine: step 1/1. Controls arginine catabolism. The protein is Arginase (rocF) of Bacillus caldovelox.